The chain runs to 513 residues: Varicidin biosynthesis cluster-specific transcription factor (513 aa).

A DNA-binding region (zn(2)-C6 fungal-type) is located at residues 16–54; the sequence is CERCRLHKLKCTILPQKRFEGPQEAPEQCTRCARAKAKC. Disordered stretches follow at residues 58–92 and 97–116; these read RRAP…MQPN and VSSH…SSLK. Positions 67 to 76 are enriched in low complexity; it reads SSSNDRSSVS. Over residues 77-92 the composition is skewed to polar residues; that stretch reads KGINSTTPATRTMQPN.

The protein localises to the nucleus. In terms of biological role, transcription factor that regulates the expression of the gene cluster that mediates the biosynthesis of varicidin A, an antifungal natural product containing a cis-octahydrodecalin core. The chain is Varicidin biosynthesis cluster-specific transcription factor from Talaromyces variabilis (Penicillium variabile).